Consider the following 44-residue polypeptide: Large ribosomal subunit protein bL34 (44 aa).

Composition is skewed to basic residues over residues 1-14 (MKRTLGGTTRKRQK) and 31-44 (LSARRRRGRHRLAV). Positions 1–44 (MKRTLGGTTRKRQKTSGFRARMRTASGRRVLSARRRRGRHRLAV) are disordered.

Belongs to the bacterial ribosomal protein bL34 family.

The polypeptide is Large ribosomal subunit protein bL34 (Gloeobacter violaceus (strain ATCC 29082 / PCC 7421)).